The sequence spans 305 residues: Glutaminase (305 aa).

Serine 61, asparagine 113, glutamate 158, asparagine 165, tyrosine 189, tyrosine 241, and valine 259 together coordinate substrate.

It belongs to the glutaminase family. As to quaternary structure, homotetramer.

It catalyses the reaction L-glutamine + H2O = L-glutamate + NH4(+). This chain is Glutaminase, found in Clostridium botulinum (strain Kyoto / Type A2).